The following is a 332-amino-acid chain: DNA-directed RNA polymerase subunit alpha (332 aa).

An alpha N-terminal domain (alpha-NTD) region spans residues 1 to 244 (MKKHAKVYYS…AHLNLLADVE (244 aa)). An alpha C-terminal domain (alpha-CTD) region spans residues 259 to 332 (IKEEPIRRFS…NYKNENKGEN (74 aa)).

The protein belongs to the RNA polymerase alpha chain family. As to quaternary structure, homodimer. The RNAP catalytic core consists of 2 alpha, 1 beta, 1 beta' and 1 omega subunit. When a sigma factor is associated with the core the holoenzyme is formed, which can initiate transcription.

The catalysed reaction is RNA(n) + a ribonucleoside 5'-triphosphate = RNA(n+1) + diphosphate. In terms of biological role, DNA-dependent RNA polymerase catalyzes the transcription of DNA into RNA using the four ribonucleoside triphosphates as substrates. The sequence is that of DNA-directed RNA polymerase subunit alpha from Mesomycoplasma hyopneumoniae (strain 7448) (Mycoplasma hyopneumoniae).